A 165-amino-acid chain; its full sequence is Chorismate pyruvate-lyase (165 aa).

The substrate site is built by M35, R77, L115, and E156.

Belongs to the UbiC family. In terms of assembly, monomer.

It is found in the cytoplasm. It catalyses the reaction chorismate = 4-hydroxybenzoate + pyruvate. It participates in cofactor biosynthesis; ubiquinone biosynthesis. Its function is as follows. Removes the pyruvyl group from chorismate, with concomitant aromatization of the ring, to provide 4-hydroxybenzoate (4HB) for the ubiquinone pathway. The protein is Chorismate pyruvate-lyase of Citrobacter koseri (strain ATCC BAA-895 / CDC 4225-83 / SGSC4696).